Here is a 274-residue protein sequence, read N- to C-terminus: Ribulose-phosphate 3-epimerase, chloroplastic (274 aa).

The N-terminal 39 residues, 1 to 39, are a transit peptide targeting the chloroplast; it reads MASPSSSSSLCSTFASPRAASLGRRLAFSSPRKAFRVRA. S56 provides a ligand contact to substrate. The a divalent metal cation site is built by H81, D83, and H114. D83 functions as the Proton acceptor in the catalytic mechanism. Residues H114, 192–195, 225–227, and 247–248 each bind substrate; these read GFGG, DGG, and GS. Residue D225 coordinates a divalent metal cation. D225 serves as the catalytic Proton donor.

This sequence belongs to the ribulose-phosphate 3-epimerase family. In terms of assembly, homooctamer. Co(2+) serves as cofactor. It depends on Fe(2+) as a cofactor. Mn(2+) is required as a cofactor. The cofactor is Zn(2+).

Its subcellular location is the plastid. The protein localises to the chloroplast thylakoid membrane. The catalysed reaction is D-ribulose 5-phosphate = D-xylulose 5-phosphate. Its pathway is carbohydrate biosynthesis; Calvin cycle. Its function is as follows. Catalyzes the reversible epimerization of D-ribulose 5-phosphate to D-xylulose 5-phosphate. The sequence is that of Ribulose-phosphate 3-epimerase, chloroplastic (RPE) from Oryza sativa subsp. japonica (Rice).